The primary structure comprises 308 residues: Ferrochelatase (308 aa).

Residues histidine 167 and glutamate 239 each coordinate Fe cation.

It belongs to the ferrochelatase family.

The protein resides in the cytoplasm. It catalyses the reaction heme b + 2 H(+) = protoporphyrin IX + Fe(2+). Its pathway is porphyrin-containing compound metabolism; protoheme biosynthesis; protoheme from protoporphyrin-IX: step 1/1. In terms of biological role, catalyzes the ferrous insertion into protoporphyrin IX. This Thermoplasma acidophilum (strain ATCC 25905 / DSM 1728 / JCM 9062 / NBRC 15155 / AMRC-C165) protein is Ferrochelatase.